We begin with the raw amino-acid sequence, 320 residues long: MSNTNKSEPNHSCKVVYASRVAETFVEQLKQHVNLFEFAPKLVGFLSNSDPAARMYADWTNKTCTEIGFQYELREVPKDDLEDAIVEANNDPSVNGIMIYFPVFNDGQDQYLQQVVSPDKDVEGLCHKYVMNMYHNIRHLDPEKTKKSILPCTPLAIVKILEYLGVYNKIINYGNRLYGKTITIVNRSEIVGRPLAALLANDGAKVYSVDIHNVQCFTRGAGIRSKKHDVADTNFKLEDVAPISDVIICGVPSANYKFPSNLVRDGAVCICFSSEKNFDAASLKEHAGIYVPSIGKVTIAMLLRNLIRLTSYQLNKPVDI.

The active site involves cysteine 152. Residues 187-188 (RS) and 210-211 (DI) each bind NAD(+).

The protein belongs to the tetrahydrofolate dehydrogenase/cyclohydrolase family. In terms of assembly, homodimer.

The protein resides in the cytoplasm. The protein localises to the nucleus. The catalysed reaction is (6R)-5,10-methylene-5,6,7,8-tetrahydrofolate + NAD(+) = (6R)-5,10-methenyltetrahydrofolate + NADH. The protein operates within one-carbon metabolism; tetrahydrofolate interconversion. Catalyzes oxidation of cytoplasmic one-carbon units for purine biosynthesis. This Schizosaccharomyces pombe (strain 972 / ATCC 24843) (Fission yeast) protein is Methylenetetrahydrofolate dehydrogenase [NAD(+)] (mtd1).